A 235-amino-acid chain; its full sequence is Large ribosomal subunit protein uL1 (235 aa).

This sequence belongs to the universal ribosomal protein uL1 family. In terms of assembly, part of the 50S ribosomal subunit.

Binds directly to 23S rRNA. The L1 stalk is quite mobile in the ribosome, and is involved in E site tRNA release. In terms of biological role, protein L1 is also a translational repressor protein, it controls the translation of the L11 operon by binding to its mRNA. In Mycobacterium sp. (strain JLS), this protein is Large ribosomal subunit protein uL1.